The following is a 126-amino-acid chain: Large ribosomal subunit protein bL12 (126 aa).

Belongs to the bacterial ribosomal protein bL12 family. In terms of assembly, homodimer. Part of the ribosomal stalk of the 50S ribosomal subunit. Forms a multimeric L10(L12)X complex, where L10 forms an elongated spine to which 2 to 4 L12 dimers bind in a sequential fashion. Binds GTP-bound translation factors.

Its function is as follows. Forms part of the ribosomal stalk which helps the ribosome interact with GTP-bound translation factors. Is thus essential for accurate translation. The sequence is that of Large ribosomal subunit protein bL12 from Desulfatibacillum aliphaticivorans.